Here is a 440-residue protein sequence, read N- to C-terminus: Chromosome partition protein MukF (440 aa).

The leucine-zipper stretch occupies residues 208-236 (LSETSGTLRELQDTLEAAGDKLQANLLRI).

It belongs to the MukF family. In terms of assembly, interacts, and probably forms a ternary complex, with MukE and MukB via its C-terminal region. The complex formation is stimulated by calcium or magnesium. It is required for an interaction between MukE and MukB.

It localises to the cytoplasm. Its subcellular location is the nucleoid. Functionally, involved in chromosome condensation, segregation and cell cycle progression. May participate in facilitating chromosome segregation by condensation DNA from both sides of a centrally located replisome during cell division. Not required for mini-F plasmid partitioning. Probably acts via its interaction with MukB and MukE. Overexpression results in anucleate cells. It has a calcium binding activity. The chain is Chromosome partition protein MukF from Shigella boydii serotype 18 (strain CDC 3083-94 / BS512).